A 290-amino-acid chain; its full sequence is TP53-target gene 5 protein (290 aa).

Basic residues predominate over residues 1-13 (MSPSAKKRPKNSR). Disordered stretches follow at residues 1-29 (MSPSAKKRPKNSRVSKMQDEKLRDETEQP) and 114-178 (KLES…RQPL). 3 stretches are compositionally biased toward basic and acidic residues: residues 16–26 (KMQDEKLRDET), 114–130 (KLESTGDPKKKEYKEWK), and 138–167 (RNKEKTSLAAMPRKEKHIEPEVPRTSRDDS).

Interacts with p53/TP53. As to expression, highly expressed in heart, brain and small intestine. Less abundant in skeletal muscle, spleen, prostate, ovary and colon. A smaller transcript is expressed specifically in the testis.

It is found in the cytoplasm. The protein resides in the nucleus. In terms of biological role, may play a significant role in p53/TP53-mediating signaling pathway. This is TP53-target gene 5 protein (TP53TG5) from Homo sapiens (Human).